Reading from the N-terminus, the 147-residue chain is Large ribosomal subunit protein bL9 (147 aa).

The protein belongs to the bacterial ribosomal protein bL9 family.

Functionally, binds to the 23S rRNA. This is Large ribosomal subunit protein bL9 from Citrifermentans bemidjiense (strain ATCC BAA-1014 / DSM 16622 / JCM 12645 / Bem) (Geobacter bemidjiensis).